The chain runs to 159 residues: Thioredoxin O2, mitochondrial (159 aa).

A Phosphoserine modification is found at Ser40. The region spanning 43–159 (FAEGDRSSFV…LKSVMEQLYK (117 aa)) is the Thioredoxin domain. Residues Cys83 and Cys86 each act as nucleophile in the active site. A disulfide bridge links Cys83 with Cys86.

The protein belongs to the thioredoxin family. Plant O-type subfamily.

The protein resides in the mitochondrion. Its function is as follows. Thiol-disulfide oxidoreductase that may participate in various redox reactions. Possesses insulin disulfide bonds reducing activity. Reduced by thioredoxin reductases NTRA and NTRB. This chain is Thioredoxin O2, mitochondrial, found in Arabidopsis thaliana (Mouse-ear cress).